The sequence spans 225 residues: Urease accessory protein UreF (225 aa).

The protein belongs to the UreF family. UreD, UreF and UreG form a complex that acts as a GTP-hydrolysis-dependent molecular chaperone, activating the urease apoprotein by helping to assemble the nickel containing metallocenter of UreC. The UreE protein probably delivers the nickel.

It localises to the cytoplasm. In terms of biological role, required for maturation of urease via the functional incorporation of the urease nickel metallocenter. The chain is Urease accessory protein UreF from Picosynechococcus sp. (strain ATCC 27264 / PCC 7002 / PR-6) (Agmenellum quadruplicatum).